A 412-amino-acid polypeptide reads, in one-letter code: Multidrug resistance protein MdtG (412 aa).

Helical transmembrane passes span 20–40 (LFVA…IMPF), 62–82 (LVFS…GGLA), 96–116 (LGMS…QFLI), 119–139 (ALLG…ATQI), 150–170 (TLST…GLLA), 177–197 (PVFF…LYFI), 225–245 (VLCL…IAPI), 260–280 (LAFI…MSAP), 294–314 (ILVA…LVQT), and 382–402 (TVFF…YWCL).

Belongs to the major facilitator superfamily. DHA1 family. MdtG (TC 2.A.1.2.20) subfamily.

It localises to the cell inner membrane. This is Multidrug resistance protein MdtG from Rahnella sp. (strain Y9602).